A 301-amino-acid chain; its full sequence is uncharacterized protein (301 aa).

Residues E146, E148, and D177 each contribute to the a divalent metal cation site.

The protein belongs to the FAH family.

This is an uncharacterized protein from Staphylococcus epidermidis (strain ATCC 12228 / FDA PCI 1200).